A 1117-amino-acid chain; its full sequence is Mitochondrial protein cyt-4 (1117 aa).

Residues 561-916 (RQDFYTSTVY…LVHWQIQAAL (356 aa)) form the RNB domain. A disordered region spans residues 705 to 730 (VVLEVGTPPSAEDEAPTRKMTKPDEL). A compositionally biased stretch (basic and acidic residues) spans 719–730 (APTRKMTKPDEL).

It belongs to the RNR ribonuclease family. In terms of assembly, homodimer.

The protein localises to the mitochondrion. Functionally, required for RNA 5'- and 3'-end processing and splicing. May act on the RNA processing enzymes directly, or it may act on other regulatory molecules, which influence the activity or synthesis of these enzymes. This is Mitochondrial protein cyt-4 (cyt-4) from Neurospora crassa (strain ATCC 24698 / 74-OR23-1A / CBS 708.71 / DSM 1257 / FGSC 987).